A 395-amino-acid chain; its full sequence is Lipid-A-disaccharide synthase (395 aa).

The protein belongs to the LpxB family.

The enzyme catalyses a lipid X + a UDP-2-N,3-O-bis[(3R)-3-hydroxyacyl]-alpha-D-glucosamine = a lipid A disaccharide + UDP + H(+). Its pathway is bacterial outer membrane biogenesis; LPS lipid A biosynthesis. Condensation of UDP-2,3-diacylglucosamine and 2,3-diacylglucosamine-1-phosphate to form lipid A disaccharide, a precursor of lipid A, a phosphorylated glycolipid that anchors the lipopolysaccharide to the outer membrane of the cell. This chain is Lipid-A-disaccharide synthase, found in Bordetella avium (strain 197N).